Consider the following 505-residue polypeptide: Glutamate--tRNA ligase (505 aa).

The 'HIGH' region motif lies at 12-22 (PSPTGALHIGG). A 'KMSKS' region motif is present at residues 260 to 264 (KLSKR). Lysine 263 is an ATP binding site.

It belongs to the class-I aminoacyl-tRNA synthetase family. Glutamate--tRNA ligase type 1 subfamily. In terms of assembly, monomer.

The protein resides in the cytoplasm. It carries out the reaction tRNA(Glu) + L-glutamate + ATP = L-glutamyl-tRNA(Glu) + AMP + diphosphate. In terms of biological role, catalyzes the attachment of glutamate to tRNA(Glu) in a two-step reaction: glutamate is first activated by ATP to form Glu-AMP and then transferred to the acceptor end of tRNA(Glu). The chain is Glutamate--tRNA ligase from Bacteroides fragilis (strain ATCC 25285 / DSM 2151 / CCUG 4856 / JCM 11019 / LMG 10263 / NCTC 9343 / Onslow / VPI 2553 / EN-2).